Reading from the N-terminus, the 434-residue chain is ATP-dependent RNA helicase sub2 (434 aa).

The short motif at 59–87 (TGFRDFLLKGELLRAITDCGFEHPSEVQQ) is the Q motif element. Positions 90-265 (IPTAILNVDV…KKFMRNPLEV (176 aa)) constitute a Helicase ATP-binding domain. Position 103–110 (103–110 (AKSGLGKT)) interacts with ATP. Positions 212–215 (DECD) match the DECD box motif. A Helicase C-terminal domain is found at 293–430 (KLNELLDSLE…EYPEEGVDSS (138 aa)).

It belongs to the DEAD box helicase family. DECD subfamily.

The protein localises to the nucleus. The enzyme catalyses ATP + H2O = ADP + phosphate + H(+). Functionally, ATP-binding RNA helicase involved in transcription elongation and required for the export of mRNA out of the nucleus. SUB2 also plays a role in pre-mRNA splicing and spliceosome assembly. May be involved in rDNA and telomeric silencing, and maintenance of genome integrity. The sequence is that of ATP-dependent RNA helicase sub2 (sub2) from Emericella nidulans (strain FGSC A4 / ATCC 38163 / CBS 112.46 / NRRL 194 / M139) (Aspergillus nidulans).